A 69-amino-acid chain; its full sequence is Large ribosomal subunit protein bL31 (69 aa).

Residues Cys-16, Cys-18, Cys-36, and Cys-39 each coordinate Zn(2+).

This sequence belongs to the bacterial ribosomal protein bL31 family. Type A subfamily. In terms of assembly, part of the 50S ribosomal subunit. It depends on Zn(2+) as a cofactor.

Binds the 23S rRNA. The polypeptide is Large ribosomal subunit protein bL31 (Thermosipho africanus (strain TCF52B)).